Reading from the N-terminus, the 555-residue chain is Urocanate hydratase (555 aa).

NAD(+)-binding positions include 52 to 53 (GG), glutamine 130, 176 to 178 (GMG), glutamate 196, arginine 201, 242 to 243 (NA), 263 to 267 (QTSAH), 273 to 274 (YL), and tyrosine 322. Residue cysteine 410 is part of the active site. Glycine 492 is a binding site for NAD(+).

It belongs to the urocanase family. NAD(+) serves as cofactor.

Its subcellular location is the cytoplasm. The enzyme catalyses 4-imidazolone-5-propanoate = trans-urocanate + H2O. It participates in amino-acid degradation; L-histidine degradation into L-glutamate; N-formimidoyl-L-glutamate from L-histidine: step 2/3. Catalyzes the conversion of urocanate to 4-imidazolone-5-propionate. This is Urocanate hydratase from Shewanella baltica (strain OS155 / ATCC BAA-1091).